The primary structure comprises 282 residues: Bifunctional protein FolD (282 aa).

163 to 165 (GRS) is a binding site for NADP(+).

This sequence belongs to the tetrahydrofolate dehydrogenase/cyclohydrolase family. As to quaternary structure, homodimer.

It carries out the reaction (6R)-5,10-methylene-5,6,7,8-tetrahydrofolate + NADP(+) = (6R)-5,10-methenyltetrahydrofolate + NADPH. The catalysed reaction is (6R)-5,10-methenyltetrahydrofolate + H2O = (6R)-10-formyltetrahydrofolate + H(+). The protein operates within one-carbon metabolism; tetrahydrofolate interconversion. Catalyzes the oxidation of 5,10-methylenetetrahydrofolate to 5,10-methenyltetrahydrofolate and then the hydrolysis of 5,10-methenyltetrahydrofolate to 10-formyltetrahydrofolate. This is Bifunctional protein FolD from Leuconostoc citreum (strain KM20).